Reading from the N-terminus, the 184-residue chain is Ribosome-recycling factor (184 aa).

Belongs to the RRF family.

Its subcellular location is the cytoplasm. Its function is as follows. Responsible for the release of ribosomes from messenger RNA at the termination of protein biosynthesis. May increase the efficiency of translation by recycling ribosomes from one round of translation to another. The polypeptide is Ribosome-recycling factor (Thermoanaerobacter pseudethanolicus (strain ATCC 33223 / 39E) (Clostridium thermohydrosulfuricum)).